Reading from the N-terminus, the 115-residue chain is Guanylin (115 aa).

Residues 1–23 (MNAWLLSVLCLLGALAVLVEGVT) form the signal peptide. Positions 24–100 (VQDGDLSFPL…LQRLEAIAQD (77 aa)) are excised as a propeptide. Cystine bridges form between Cys-69–Cys-82, Cys-104–Cys-112, and Cys-107–Cys-115.

It belongs to the guanylin family. In terms of tissue distribution, intestine and in low abundance in adrenal gland, kidney, and uterus/oviduct.

It localises to the secreted. Its function is as follows. Endogenous activator of intestinal guanylate cyclase. It stimulates this enzyme through the same receptor binding region as the heat-stable enterotoxins. This Rattus norvegicus (Rat) protein is Guanylin (Guca2a).